The primary structure comprises 2136 residues: U5 small nuclear ribonucleoprotein 200 kDa helicase (2136 aa).

Phosphoserine is present on residues Ser17 and Ser26. The disordered stretch occupies residues 39–81 (EVLSLVGKLEGTRMGDKAQRTKPQMQEERRAKRRKRDEDRHDM). Lys46 participates in a covalent cross-link: Glycyl lysine isopeptide (Lys-Gly) (interchain with G-Cter in SUMO2). Positions 48–81 (EGTRMGDKAQRTKPQMQEERRAKRRKRDEDRHDM) are enriched in basic and acidic residues. The stretch at 54–84 (DKAQRTKPQMQEERRAKRRKRDEDRHDMNKM) forms a coiled coil. The residue at position 225 (Ser225) is a Phosphoserine. At Thr389 the chain carries Phosphothreonine. Positions 395 to 2129 (DLDQGGEALA…YKFSVDVKEA (1735 aa)) are interaction with C9orf78 and WBP4. The region spanning 490–673 (RAALETDENL…FLRVDPAKGL (184 aa)) is the Helicase ATP-binding 1 domain. 503-510 (APTGAGKT) serves as a coordination point for ATP. A DEAH box motif is present at residues 615–618 (DEIH). One can recognise a Helicase C-terminal 1 domain in the interval 684-921 (PLEQTYVGIT…NAKDAVNWLG (238 aa)). A Phosphotyrosine modification is found at Tyr709. Lys944 participates in a covalent cross-link: Glycyl lysine isopeptide (Lys-Gly) (interchain with G-Cter in SUMO). An N6-acetyllysine; alternate modification is found at Lys971. Lys971 is covalently cross-linked (Glycyl lysine isopeptide (Lys-Gly) (interchain with G-Cter in SUMO); alternate). The SEC63 1 domain maps to 982–1286 (TELGRIASHY…SCETQLPVSF (305 aa)). Residues Lys1071 and Lys1199 each participate in a glycyl lysine isopeptide (Lys-Gly) (interchain with G-Cter in SUMO) cross-link. The interval 1282–2136 (LPVSFRHLIL…KEAETDSDSD (855 aa)) is interaction with TSSC4. In terms of domain architecture, Helicase ATP-binding 2 spans 1337 to 1512 (NTVYNSDDNV…WLGCSATSTF (176 aa)). An ATP-binding site is contributed by 1350-1357 (APTGSGKT). The residue at position 1428 (Thr1428) is a Phosphothreonine. The short motif at 1454-1457 (DEVH) is the DEAH box element. The 209-residue stretch at 1545–1753 (PVYHAITKHS…TIENKQDAVD (209 aa)) folds into the Helicase C-terminal 2 domain. Thr1765 carries the phosphothreonine modification. In terms of domain architecture, SEC63 2 spans 1812–2124 (PLNLGMIAAY…GCDQEYKFSV (313 aa)). Position 2002 is a phosphoserine (Ser2002). Lys2091 is covalently cross-linked (Glycyl lysine isopeptide (Lys-Gly) (interchain with G-Cter in SUMO)). At Thr2131 the chain carries Phosphothreonine. 2 positions are modified to phosphoserine: Ser2133 and Ser2135.

This sequence belongs to the helicase family. SKI2 subfamily. As to quaternary structure, component of a core complex containing at least PRPF8, SNRNP200, EFTUD2 and SNRNP40. Component of the U5 snRNP and U4/U6-U5 tri-snRNP complexes, building blocks of the spliceosome. Component of the U4/U6-U5 tri-snRNP complex composed of the U4, U6 and U5 snRNAs and at least PRPF3, PRPF4, PRPF6, PRPF8, PRPF31, SNRNP200, TXNL4A, SNRNP40, DDX23, CD2BP2, PPIH, SNU13, EFTUD2, SART1 and USP39. Component of precatalytic, catalytic and postcatalytic spliceosomal complexes. Component of the minor spliceosome, which splices U12-type introns. Interacts with C9orf78; the interaction is direct and mutually exclusive with its interaction with WBP4. Interacts with WBP4; the interaction is mutually exclusive with its interaction with C9orf78. Interacts with PRPF8. Interacts with TSSC4; the interaction is direct, excludes recruitment of C9ORF78 and WBP4 to SNRNP200 and negatively regulates its RNA helicase activity.

The protein resides in the nucleus. The catalysed reaction is ATP + H2O = ADP + phosphate + H(+). Its function is as follows. Catalyzes the ATP-dependent unwinding of U4/U6 RNA duplices, an essential step in the assembly of a catalytically active spliceosome. Plays a role in pre-mRNA splicing as core component of precatalytic, catalytic and postcatalytic spliceosomal complexes. As a component of the minor spliceosome, involved in the splicing of U12-type introns in pre-mRNAs. Involved in spliceosome assembly, activation and disassembly. Mediates changes in the dynamic network of RNA-RNA interactions in the spliceosome. The polypeptide is U5 small nuclear ribonucleoprotein 200 kDa helicase (Snrnp200) (Mus musculus (Mouse)).